Reading from the N-terminus, the 418-residue chain is UDP-N-acetylglucosamine 1-carboxyvinyltransferase (418 aa).

Residue 22-23 (KN) coordinates phosphoenolpyruvate. A UDP-N-acetyl-alpha-D-glucosamine-binding site is contributed by Arg-92. The active-site Proton donor is Cys-116. Position 116 is a 2-(S-cysteinyl)pyruvic acid O-phosphothioketal (Cys-116). UDP-N-acetyl-alpha-D-glucosamine-binding positions include 121 to 125 (RPVDQ), Asp-306, and Ile-328.

This sequence belongs to the EPSP synthase family. MurA subfamily.

It localises to the cytoplasm. It catalyses the reaction phosphoenolpyruvate + UDP-N-acetyl-alpha-D-glucosamine = UDP-N-acetyl-3-O-(1-carboxyvinyl)-alpha-D-glucosamine + phosphate. Its pathway is cell wall biogenesis; peptidoglycan biosynthesis. Its function is as follows. Cell wall formation. Adds enolpyruvyl to UDP-N-acetylglucosamine. The chain is UDP-N-acetylglucosamine 1-carboxyvinyltransferase from Acinetobacter baylyi (strain ATCC 33305 / BD413 / ADP1).